We begin with the raw amino-acid sequence, 252 residues long: Probable ABC transporter ATP-binding protein p29 (252 aa).

The ABC transporter domain occupies 8–252 (LEIKNLTFKN…NILDQVFKND (245 aa)). Residue 42–49 (GSSGQGKS) participates in ATP binding.

Belongs to the ABC transporter superfamily.

Part of a high-affinity transport system. The chain is Probable ABC transporter ATP-binding protein p29 from Mesomycoplasma hyorhinis (Mycoplasma hyorhinis).